The chain runs to 548 residues: Probable malate:quinone oxidoreductase (548 aa).

This sequence belongs to the MQO family. It depends on FAD as a cofactor.

The enzyme catalyses (S)-malate + a quinone = a quinol + oxaloacetate. The protein operates within carbohydrate metabolism; tricarboxylic acid cycle; oxaloacetate from (S)-malate (quinone route): step 1/1. The sequence is that of Probable malate:quinone oxidoreductase from Escherichia coli O127:H6 (strain E2348/69 / EPEC).